Consider the following 104-residue polypeptide: Secretoglobin family 3A member 1 (104 aa).

Positions 1–21 are cleaved as a signal peptide; that stretch reads MKLTTTFLVLCVALLSDSGVA.

Belongs to the secretoglobin family. UGRP subfamily. As to quaternary structure, homodimer; disulfide-linked. As to expression, highly expressed in lung, where it localizes to epithelial cells lining the trachea and bronchi. Expression in lung is mainly restricted to bronchi, submucosal glands of the trachea, and tracheal epithelium, with little expression in terminal bronchioles. Expressed in uterus where it localizes to epithelial cells of the uterine glands. Also detected in heart, stomach and small intestine.

Its subcellular location is the secreted. Secreted cytokine-like protein. Inhibits cell growth in vitro. The chain is Secretoglobin family 3A member 1 (Scgb3a1) from Mus musculus (Mouse).